The primary structure comprises 465 residues: MESFFNSLINIPSDFIWKYLFYILIGLGLFFTIRFGFIQFRYFIEMFRIVGEKPEGNKGVSSMQAFFISAASRVGTGNLTGVALAIATGGPGAVFWMWVVAAVGMASSFVESTLAQLYKVRDGEDFRGGPAYYIQKGLGARWLGIVFAILITVSFGLIFNAVQTNTIAGALDGAFHVNKIVVAIVLAVLTAFIIFGGLKRVVAVSQLIVPVMAGIYILIALFVVITNITAFPGVIATIVKNALGFEQVVGGGIGGIIVIGAQRGLFSNEAGMGSAPNAAATAHVSHPAKQGFIQTLGVFFDTFIICTSTAFIILLYSVTPKGDGIQVTQAALNHHIGGWAPTFIAVAMFLFAFSSVVGNYYYGETNIEFIKTSKTWLNIYRIAVIAMVVYGSLSGFQIVWDMADLFMGIMALINLIVIALLSNVAYKVYKDYAKQRKQGLDPVFKAKNIPGLKNAETWEDEKQEA.

A run of 10 helical transmembrane segments spans residues 20-40 (LFYILIGLGLFFTIRFGFIQF), 82-102 (VALAIATGGPGAVFWMWVVAA), 142-162 (WLGIVFAILITVSFGLIFNAV), 177-197 (VNKIVVAIVLAVLTAFIIFGG), 208-228 (IVPVMAGIYILIALFVVITNI), 241-261 (NALGFEQVVGGGIGGIIVIGA), 296-316 (LGVFFDTFIICTSTAFIILLY), 336-356 (IGGWAPTFIAVAMFLFAFSSV), 382-402 (IAVIAMVVYGSLSGFQIVWDM), and 405-425 (LFMGIMALINLIVIALLSNVA).

Belongs to the alanine or glycine:cation symporter (AGCS) (TC 2.A.25) family.

It is found in the cell membrane. The protein is Amino-acid carrier protein AlsT (alsT) of Bacillus subtilis (strain 168).